The primary structure comprises 590 residues: CTP synthase (590 aa).

Positions 1–278 (MRKHPQSATK…DAFVVRRLNL (278 aa)) are amidoligase domain. Residue serine 20 participates in CTP binding. Serine 20 contacts UTP. Residues 21 to 26 (SLGKGL) and aspartate 78 contribute to the ATP site. Mg(2+) is bound by residues aspartate 78 and glutamate 152. Residues 159 to 161 (DIE), 199 to 204 (KTKPTQ), and lysine 235 contribute to the CTP site. Residues 199 to 204 (KTKPTQ) and lysine 235 contribute to the UTP site. Residues 303 to 551 (RIALVGKYVD…VGAAIDYKSA (249 aa)) form the Glutamine amidotransferase type-1 domain. Position 366 (glycine 366) interacts with L-glutamine. Catalysis depends on cysteine 393, which acts as the Nucleophile; for glutamine hydrolysis. L-glutamine is bound by residues 394-397 (LGLQ), glutamate 416, and arginine 477. Residues histidine 524 and glutamate 526 contribute to the active site. The interval 566–590 (EHLPNSSNQHRDGVERSFPAPAARG) is disordered.

Belongs to the CTP synthase family. In terms of assembly, homotetramer.

The enzyme catalyses UTP + L-glutamine + ATP + H2O = CTP + L-glutamate + ADP + phosphate + 2 H(+). It catalyses the reaction L-glutamine + H2O = L-glutamate + NH4(+). The catalysed reaction is UTP + NH4(+) + ATP = CTP + ADP + phosphate + 2 H(+). Its pathway is pyrimidine metabolism; CTP biosynthesis via de novo pathway; CTP from UDP: step 2/2. Its activity is regulated as follows. Allosterically activated by GTP, when glutamine is the substrate; GTP has no effect on the reaction when ammonia is the substrate. The allosteric effector GTP functions by stabilizing the protein conformation that binds the tetrahedral intermediate(s) formed during glutamine hydrolysis. Inhibited by the product CTP, via allosteric rather than competitive inhibition. Catalyzes the ATP-dependent amination of UTP to CTP with either L-glutamine or ammonia as the source of nitrogen. Regulates intracellular CTP levels through interactions with the four ribonucleotide triphosphates. The chain is CTP synthase from Mycobacterium leprae (strain Br4923).